The following is a 314-amino-acid chain: 4-hydroxy-3-methylbut-2-enyl diphosphate reductase (314 aa).

Cys12 serves as a coordination point for [4Fe-4S] cluster. Positions 41 and 74 each coordinate (2E)-4-hydroxy-3-methylbut-2-enyl diphosphate. Residues His41 and His74 each coordinate dimethylallyl diphosphate. The isopentenyl diphosphate site is built by His41 and His74. Position 96 (Cys96) interacts with [4Fe-4S] cluster. Residue His124 participates in (2E)-4-hydroxy-3-methylbut-2-enyl diphosphate binding. His124 is a binding site for dimethylallyl diphosphate. His124 contacts isopentenyl diphosphate. Catalysis depends on Glu126, which acts as the Proton donor. Residue Thr167 participates in (2E)-4-hydroxy-3-methylbut-2-enyl diphosphate binding. Residue Cys197 participates in [4Fe-4S] cluster binding. (2E)-4-hydroxy-3-methylbut-2-enyl diphosphate-binding residues include Ser225, Ser226, Asn227, and Ser269. Dimethylallyl diphosphate contacts are provided by Ser225, Ser226, Asn227, and Ser269. Ser225, Ser226, Asn227, and Ser269 together coordinate isopentenyl diphosphate.

Belongs to the IspH family. Requires [4Fe-4S] cluster as cofactor.

The catalysed reaction is isopentenyl diphosphate + 2 oxidized [2Fe-2S]-[ferredoxin] + H2O = (2E)-4-hydroxy-3-methylbut-2-enyl diphosphate + 2 reduced [2Fe-2S]-[ferredoxin] + 2 H(+). The enzyme catalyses dimethylallyl diphosphate + 2 oxidized [2Fe-2S]-[ferredoxin] + H2O = (2E)-4-hydroxy-3-methylbut-2-enyl diphosphate + 2 reduced [2Fe-2S]-[ferredoxin] + 2 H(+). The protein operates within isoprenoid biosynthesis; dimethylallyl diphosphate biosynthesis; dimethylallyl diphosphate from (2E)-4-hydroxy-3-methylbutenyl diphosphate: step 1/1. It functions in the pathway isoprenoid biosynthesis; isopentenyl diphosphate biosynthesis via DXP pathway; isopentenyl diphosphate from 1-deoxy-D-xylulose 5-phosphate: step 6/6. Its function is as follows. Catalyzes the conversion of 1-hydroxy-2-methyl-2-(E)-butenyl 4-diphosphate (HMBPP) into a mixture of isopentenyl diphosphate (IPP) and dimethylallyl diphosphate (DMAPP). Acts in the terminal step of the DOXP/MEP pathway for isoprenoid precursor biosynthesis. The protein is 4-hydroxy-3-methylbut-2-enyl diphosphate reductase of Haemophilus ducreyi (strain 35000HP / ATCC 700724).